The chain runs to 348 residues: Heptaprenyl diphosphate synthase component 2 (348 aa).

Positions 73, 76, and 105 each coordinate isopentenyl diphosphate. Aspartate 112 and aspartate 116 together coordinate Mg(2+). Arginine 121 is an all-trans-hexaprenyl diphosphate binding site. Arginine 122 contributes to the isopentenyl diphosphate binding site. All-trans-hexaprenyl diphosphate-binding residues include lysine 198, threonine 199, and glutamine 236.

The protein belongs to the FPP/GGPP synthase family. As to quaternary structure, heterodimer of component I and II. The cofactor is Mg(2+).

It carries out the reaction 4 isopentenyl diphosphate + (2E,6E)-farnesyl diphosphate = all-trans-heptaprenyl diphosphate + 4 diphosphate. Supplies heptaprenyl diphosphate, the precursor for the side chain of the isoprenoid quinone menaquinone-7 (MQ-7). This chain is Heptaprenyl diphosphate synthase component 2 (hepT), found in Bacillus subtilis (strain 168).